The primary structure comprises 361 residues: G-protein coupled receptor 68 (361 aa).

The Extracellular portion of the chain corresponds to 1-12 (MGNITADNTSMN). 2 N-linked (GlcNAc...) asparagine glycosylation sites follow: N3 and N8. Residues 13 to 49 (CDIDHTIHQTLAPVVYVMVLVVGFPANCLSLYYGYLQ) form a helical membrane-spanning segment. 2 disulfide bridges follow: C13/C258 and C94/C172. The Cytoplasmic segment spans residues 50–53 (IKAR). The chain crosses the membrane as a helical span at residues 54-84 (NELGVYLCNLTVADLFYICSLPFWLQYVLQH). Topologically, residues 85 to 89 (DHWSH) are extracellular. A helical membrane pass occupies residues 90 to 125 (DDLSCQVCGILLYENIYISVGFLCCISIDRYLAVAH). Residues 126–133 (PFRFHQFR) lie on the Cytoplasmic side of the membrane. A helical membrane pass occupies residues 134–160 (TLKAAMGVSALIWVKELLTSIYFLMHE). At 161 to 176 (EVVEDADRHRVCFEHY) the chain is on the extracellular side. Positions 161–176 (EVVEDADRHRVCFEHY) are extracellular loop 2 (ECL2). A helical transmembrane segment spans residues 177 to 214 (PLEPRQRGINYYRFLVGFLFPICLLLASYRGILRAVRR). Over 215-218 (SHGT) the chain is Cytoplasmic. The helical transmembrane segment at 219–254 (QKSRKDQIQRLVLSTVVIFLACFLPYHVLLLVRSLW) threads the bilayer. The Extracellular segment spans residues 255 to 260 (ESSCDF). Residues 261 to 289 (AKGIFNAYHFSLLLTSFNCVADPVLYCFV) form a helical membrane-spanning segment. Residues 290–361 (SETTHRDLAR…MGGSPAGGLS (72 aa)) are Cytoplasmic-facing. The tract at residues 340-361 (LHPAFQTPHPPGMGGSPAGGLS) is disordered. Over residues 351 to 361 (GMGGSPAGGLS) the composition is skewed to gly residues.

The protein belongs to the G-protein coupled receptor 1 family.

Its subcellular location is the cell membrane. With respect to regulation, activated by a network of residues that connects an extracellular-facing cavity to Glu-149, a conserved charged residue buried in the transmembrane core of the receptor. Protonation likely drives conformational changes in extracellular loop 2 (ECL2), which stabilizes movement of transmembrane 3 (TM3) and a series of rearrangements that connect the extracellular-facing cavity to Glu-149, a residue only conserved in proton-sensing G-protein coupled receptors. Activated in an allosteric manner by divalent metal ions at the extracellular surface following the order: Cd(2+) &gt; Co(2+) &gt; Ni(2+) &gt; Zn(2+) &gt; Fe(2+) &gt; Ca(2+) &gt; Mg(2+). Functionally, proton-sensing G-protein coupled receptor activated by extracellular pH, which is required to monitor pH changes and generate adaptive reactions. The receptor is almost silent at pH 7.8 but fully activated at pH 6.8. Ligand binding causes a conformation change that triggers signaling via guanine nucleotide-binding proteins (G proteins) and modulates the activity of downstream effectors, such as phospholipase C. GPR68 is mainly coupled to G(q) G proteins and mediates production of diacylglycerol (DAG) and inositol 1,4,5-trisphosphate (IP3). Acts as a key mechanosensor of fluid shear stress and membrane stretch. Expressed in endothelial cells of small-diameter resistance arteries, where it mediates flow-induced dilation in response to shear stress. May represents an osteoblastic pH sensor regulating cell-mediated responses to acidosis in bone. Acts as a regulator of calcium-sensing receptor CASR in a seesaw manner: GPR68-mediated signaling inhibits CASR signaling in response to protons, while CASR inhibits GPR68 in presence of extracellular calcium. The protein is G-protein coupled receptor 68 (GPR68) of Bos taurus (Bovine).